Here is a 450-residue protein sequence, read N- to C-terminus: Phosphoglucosamine mutase (450 aa).

Catalysis depends on Ser101, which acts as the Phosphoserine intermediate. Mg(2+)-binding residues include Ser101, Asp240, Asp242, and Asp244. Ser101 is subject to Phosphoserine.

This sequence belongs to the phosphohexose mutase family. Mg(2+) serves as cofactor. Activated by phosphorylation. Phosphorylated by StkP in vivo.

It carries out the reaction alpha-D-glucosamine 1-phosphate = D-glucosamine 6-phosphate. Functionally, catalyzes the conversion of glucosamine-6-phosphate to glucosamine-1-phosphate. This Streptococcus pneumoniae (strain ATCC BAA-255 / R6) protein is Phosphoglucosamine mutase.